Consider the following 124-residue polypeptide: Histone H2A (124 aa).

Basic residues predominate over residues 1 to 18; it reads MSGRGKSGKARTKAKSRS. A disordered region spans residues 1–21; it reads MSGRGKSGKARTKAKSRSSRA. Residue S2 is modified to N-acetylserine. At S2 the chain carries Phosphoserine. Q104 is subject to N5-methylglutamine. K119 is covalently cross-linked (Glycyl lysine isopeptide (Lys-Gly) (interchain with G-Cter in ubiquitin)).

This sequence belongs to the histone H2A family. As to quaternary structure, the nucleosome is a histone octamer containing two molecules each of H2A, H2B, H3 and H4 assembled in one H3-H4 heterotetramer and two H2A-H2B heterodimers. The octamer wraps approximately 147 bp of DNA. In terms of processing, monoubiquitination of Lys-119 gives a specific tag for epigenetic transcriptional repression. Post-translationally, phosphorylation of Ser-2 directly represses transcription.

It is found in the nucleus. It localises to the chromosome. Functionally, core component of nucleosome. Nucleosomes wrap and compact DNA into chromatin, limiting DNA accessibility to the cellular machineries which require DNA as a template. Histones thereby play a central role in transcription regulation, DNA repair, DNA replication and chromosomal stability. DNA accessibility is regulated via a complex set of post-translational modifications of histones, also called histone code, and nucleosome remodeling. This is Histone H2A from Paracentrotus lividus (Common sea urchin).